The chain runs to 249 residues: Proteasome activator complex subunit 1 (249 aa).

Residues 60 to 102 form a disordered region; sequence PLDIPVPDPVKEKEKEERKKQQEKEDKDEKKKGEDEDKGPPCG. Residues 68-98 are compositionally biased toward basic and acidic residues; it reads PVKEKEKEERKKQQEKEDKDEKKKGEDEDKG.

The protein belongs to the PA28 family. Heterodimer of PSME1 and PSME2, which forms a hexameric ring. PSME1 can form homoheptamers.

Functionally, implicated in immunoproteasome assembly and required for efficient antigen processing. The PA28 activator complex enhances the generation of class I binding peptides by altering the cleavage pattern of the proteasome. The protein is Proteasome activator complex subunit 1 (PSME1) of Sus scrofa (Pig).